The sequence spans 586 residues: Proline--tRNA ligase (586 aa).

Belongs to the class-II aminoacyl-tRNA synthetase family. ProS type 1 subfamily. As to quaternary structure, homodimer.

It localises to the cytoplasm. The catalysed reaction is tRNA(Pro) + L-proline + ATP = L-prolyl-tRNA(Pro) + AMP + diphosphate. In terms of biological role, catalyzes the attachment of proline to tRNA(Pro) in a two-step reaction: proline is first activated by ATP to form Pro-AMP and then transferred to the acceptor end of tRNA(Pro). As ProRS can inadvertently accommodate and process non-cognate amino acids such as alanine and cysteine, to avoid such errors it has two additional distinct editing activities against alanine. One activity is designated as 'pretransfer' editing and involves the tRNA(Pro)-independent hydrolysis of activated Ala-AMP. The other activity is designated 'posttransfer' editing and involves deacylation of mischarged Ala-tRNA(Pro). The misacylated Cys-tRNA(Pro) is not edited by ProRS. This Kineococcus radiotolerans (strain ATCC BAA-149 / DSM 14245 / SRS30216) protein is Proline--tRNA ligase.